The chain runs to 157 residues: uncharacterized protein (157 aa).

Functionally, may be a DNA-binding protein involved in virion nucleoprotein condensation. This is an uncharacterized protein from Mycoplasma (Bacteriophage L2).